The chain runs to 226 residues: tRNA (guanine-N(1)-)-methyltransferase (226 aa).

Residues Gly110 and Ile130–Leu135 contribute to the S-adenosyl-L-methionine site.

This sequence belongs to the RNA methyltransferase TrmD family. Homodimer.

The protein localises to the cytoplasm. It catalyses the reaction guanosine(37) in tRNA + S-adenosyl-L-methionine = N(1)-methylguanosine(37) in tRNA + S-adenosyl-L-homocysteine + H(+). Specifically methylates guanosine-37 in various tRNAs. This chain is tRNA (guanine-N(1)-)-methyltransferase, found in Nitratiruptor sp. (strain SB155-2).